Consider the following 546-residue polypeptide: CTP synthase (546 aa).

The segment at 1-269 is amidoligase domain; it reads MADTKYIFVT…DKVTLKKLAL (269 aa). Serine 15 serves as a coordination point for CTP. Serine 15 is a binding site for UTP. 16 to 21 is a binding site for ATP; sequence SLGKGI. Tyrosine 56 lines the L-glutamine pocket. Aspartate 73 serves as a coordination point for ATP. Aspartate 73 and glutamate 143 together coordinate Mg(2+). CTP is bound by residues 150-152, 190-195, and lysine 226; these read DIE and KTKPTQ. UTP is bound by residues 190–195 and lysine 226; that span reads KTKPTQ. The 243-residue stretch at 295 to 537 folds into the Glutamine amidotransferase type-1 domain; sequence HIGLIGKYVE…VKAAHEHSVK (243 aa). Glycine 357 serves as a coordination point for L-glutamine. Residue cysteine 384 is the Nucleophile; for glutamine hydrolysis of the active site. L-glutamine is bound by residues 385–388, glutamate 408, and arginine 465; that span reads LGMQ. Residues histidine 510 and glutamate 512 contribute to the active site.

It belongs to the CTP synthase family. Homotetramer.

It carries out the reaction UTP + L-glutamine + ATP + H2O = CTP + L-glutamate + ADP + phosphate + 2 H(+). The catalysed reaction is L-glutamine + H2O = L-glutamate + NH4(+). It catalyses the reaction UTP + NH4(+) + ATP = CTP + ADP + phosphate + 2 H(+). It participates in pyrimidine metabolism; CTP biosynthesis via de novo pathway; CTP from UDP: step 2/2. Allosterically activated by GTP, when glutamine is the substrate; GTP has no effect on the reaction when ammonia is the substrate. The allosteric effector GTP functions by stabilizing the protein conformation that binds the tetrahedral intermediate(s) formed during glutamine hydrolysis. Inhibited by the product CTP, via allosteric rather than competitive inhibition. In terms of biological role, catalyzes the ATP-dependent amination of UTP to CTP with either L-glutamine or ammonia as the source of nitrogen. Regulates intracellular CTP levels through interactions with the four ribonucleotide triphosphates. In Christiangramia forsetii (strain DSM 17595 / CGMCC 1.15422 / KT0803) (Gramella forsetii), this protein is CTP synthase.